The chain runs to 488 residues: Alpha,alpha-trehalose-phosphate synthase [UDP-forming] 56 kDa subunit (488 aa).

D-glucose 6-phosphate contacts are provided by Tyr-102 and Asp-156. 2 residues coordinate UDP: Arg-293 and Lys-298. UDP-alpha-D-glucose-binding residues include Arg-293 and Lys-298. Arg-331 lines the D-glucose 6-phosphate pocket. UDP contacts are provided by residues Ile-370 and 396–400; that span reads LVSYE. UDP-alpha-D-glucose is bound by residues Ile-370 and 392-400; that span reads DGMNLVSYE.

The protein belongs to the glycosyltransferase 20 family. Trehalose synthase/phosphatase complex contains three or four polypeptides of 56 kDa (TPS1), 102 kDa (TPS2), 115 kDa (TPS3) and 123 kDa (TSL1).

The catalysed reaction is D-glucose 6-phosphate + UDP-alpha-D-glucose = alpha,alpha-trehalose 6-phosphate + UDP + H(+). Its pathway is carbohydrate biosynthesis. Functionally, synthase catalytic subunit of the trehalose synthase complex that catalyzes the production of trehalose from glucose-6-phosphate and UDP-alpha-D-glucose in a two step process. Can function independently of the complex. This chain is Alpha,alpha-trehalose-phosphate synthase [UDP-forming] 56 kDa subunit, found in Kluyveromyces lactis (strain ATCC 8585 / CBS 2359 / DSM 70799 / NBRC 1267 / NRRL Y-1140 / WM37) (Yeast).